A 103-amino-acid chain; its full sequence is NADH-quinone oxidoreductase subunit K 1 (103 aa).

The next 3 membrane-spanning stretches (helical) occupy residues 7–27 (ISWFLTLSAILFALGVAGFLF), 31–51 (IITVFMSIELMLNAVNLSFVT), and 63–83 (LFTFFVMVVAAAEAAVGLAII).

This sequence belongs to the complex I subunit 4L family. NDH-1 is composed of 14 different subunits. Subunits NuoA, H, J, K, L, M, N constitute the membrane sector of the complex.

It localises to the cell inner membrane. It carries out the reaction a quinone + NADH + 5 H(+)(in) = a quinol + NAD(+) + 4 H(+)(out). NDH-1 shuttles electrons from NADH, via FMN and iron-sulfur (Fe-S) centers, to quinones in the respiratory chain. The immediate electron acceptor for the enzyme in this species is believed to be ubiquinone. Couples the redox reaction to proton translocation (for every two electrons transferred, four hydrogen ions are translocated across the cytoplasmic membrane), and thus conserves the redox energy in a proton gradient. The protein is NADH-quinone oxidoreductase subunit K 1 of Solibacter usitatus (strain Ellin6076).